Here is a 188-residue protein sequence, read N- to C-terminus: Peptidyl-tRNA hydrolase (188 aa).

Residue tyrosine 15 participates in tRNA binding. The active-site Proton acceptor is histidine 20. Residues phenylalanine 63, asparagine 65, and asparagine 111 each coordinate tRNA.

The protein belongs to the PTH family. In terms of assembly, monomer.

It is found in the cytoplasm. It catalyses the reaction an N-acyl-L-alpha-aminoacyl-tRNA + H2O = an N-acyl-L-amino acid + a tRNA + H(+). Its function is as follows. Hydrolyzes ribosome-free peptidyl-tRNAs (with 1 or more amino acids incorporated), which drop off the ribosome during protein synthesis, or as a result of ribosome stalling. In terms of biological role, catalyzes the release of premature peptidyl moieties from peptidyl-tRNA molecules trapped in stalled 50S ribosomal subunits, and thus maintains levels of free tRNAs and 50S ribosomes. In Hydrogenobaculum sp. (strain Y04AAS1), this protein is Peptidyl-tRNA hydrolase.